We begin with the raw amino-acid sequence, 304 residues long: MSWIDRIFNKDTSSTSSRKANVPEGVWTKCTSCEQVLYRDELRRHLEVCPKCGHHMRIDARERLLALLDKDSSQELSAELEPKDILKFKDLKKYKDRISAAQKETGEKDALISMFGTLYGMPIVAAASNFSFMGGSMGSVVGAKFVQAAEKAIAENCPFVCFSASGGARMQEALFSLMQMAKTSAVLAKMREQGVPFISVLTDPTLGGVSASFAMLGDINIAEPKALIGFAGPRVIEQTVREKLPEGFQRSEFLLEKGAIDMIVKRADMRHTLASVLSKLSNKPSPFVEPELVENEEQSKSDNE.

Residues 26 to 295 (VWTKCTSCEQ…PFVEPELVEN (270 aa)) form the CoA carboxyltransferase N-terminal domain. Zn(2+) contacts are provided by C30, C33, C49, and C52. A C4-type zinc finger spans residues 30–52 (CTSCEQVLYRDELRRHLEVCPKC). The segment at 281 to 304 (SNKPSPFVEPELVENEEQSKSDNE) is disordered.

This sequence belongs to the AccD/PCCB family. As to quaternary structure, acetyl-CoA carboxylase is a heterohexamer composed of biotin carboxyl carrier protein (AccB), biotin carboxylase (AccC) and two subunits each of ACCase subunit alpha (AccA) and ACCase subunit beta (AccD). It depends on Zn(2+) as a cofactor.

Its subcellular location is the cytoplasm. The enzyme catalyses N(6)-carboxybiotinyl-L-lysyl-[protein] + acetyl-CoA = N(6)-biotinyl-L-lysyl-[protein] + malonyl-CoA. The protein operates within lipid metabolism; malonyl-CoA biosynthesis; malonyl-CoA from acetyl-CoA: step 1/1. In terms of biological role, component of the acetyl coenzyme A carboxylase (ACC) complex. Biotin carboxylase (BC) catalyzes the carboxylation of biotin on its carrier protein (BCCP) and then the CO(2) group is transferred by the transcarboxylase to acetyl-CoA to form malonyl-CoA. This is Acetyl-coenzyme A carboxylase carboxyl transferase subunit beta from Pasteurella multocida (strain Pm70).